The chain runs to 348 residues: Putative zinc metalloprotease HP_0258 (348 aa).

Zn(2+) is bound at residue H16. The active site involves E17. H20 contacts Zn(2+). 5 helical membrane passes run 43–63, 93–113, 247–267, 275–295, and 324–344; these read CFFK…GGYV, WILF…YFFL, LIMG…VGAL, MLLL…LLPI, and LWLA…FNDL. The 70-residue stretch at 106–175 folds into the PDZ domain; that stretch reads AILVYFFLAL…GELVLEIERN (70 aa).

The protein belongs to the peptidase M50B family. Requires Zn(2+) as cofactor.

It is found in the cell inner membrane. This chain is Putative zinc metalloprotease HP_0258, found in Helicobacter pylori (strain ATCC 700392 / 26695) (Campylobacter pylori).